Consider the following 261-residue polypeptide: Thiamine thiazole synthase (261 aa).

Residues Ala-33, 52–53 (ER), Gly-60, Val-124, and 152–154 (HVD) contribute to the NAD(+) site. Fe cation is bound by residues Asp-154 and His-169. NAD(+) is bound at residue Met-219. Position 229 (Arg-229) interacts with glycine.

It belongs to the THI4 family. In terms of assembly, homooctamer; tetramer of dimers. Requires Fe(2+) as cofactor.

The enzyme catalyses hydrogen sulfide + glycine + NAD(+) = ADP-5-ethyl-4-methylthiazole-2-carboxylate + nicotinamide + 3 H2O + H(+). It participates in cofactor biosynthesis; thiamine diphosphate biosynthesis. Involved in the biosynthesis of the thiazole moiety of thiamine. Catalyzes the conversion of NAD and glycine to adenosine diphosphate 5-(2-hydroxyethyl)-4-methylthiazole-2-carboxylate (ADT), an adenylated thiazole intermediate, using free sulfide as a source of sulfur. The protein is Thiamine thiazole synthase of Pyrobaculum islandicum (strain DSM 4184 / JCM 9189 / GEO3).